We begin with the raw amino-acid sequence, 339 residues long: Phosphoribosylformylglycinamidine cyclo-ligase (339 aa).

The protein belongs to the AIR synthase family.

It localises to the cytoplasm. It catalyses the reaction 2-formamido-N(1)-(5-O-phospho-beta-D-ribosyl)acetamidine + ATP = 5-amino-1-(5-phospho-beta-D-ribosyl)imidazole + ADP + phosphate + H(+). Its pathway is purine metabolism; IMP biosynthesis via de novo pathway; 5-amino-1-(5-phospho-D-ribosyl)imidazole from N(2)-formyl-N(1)-(5-phospho-D-ribosyl)glycinamide: step 2/2. The sequence is that of Phosphoribosylformylglycinamidine cyclo-ligase from Streptococcus thermophilus (strain ATCC BAA-250 / LMG 18311).